The sequence spans 649 residues: MFEIKARDAMGRLGSITINGKKIETPTIMPVIHPNPKKQTVSMDLINKMADVVITNSYITYTTPELREIAETKGIHELIDFKNVVVTDSGSFQLSVYGDVNVGPMEIIDFQEKIGVDVGTILDIPTGPDVSREKAESDLIETFKRAEDSIKRRKEMGYKLALNGTIQGSKYLDLRQKSAEVMGKMDFDIYPIGAVVPLMEDYRYREVAEVILNSKMHLPTNKPVHLFGCGHPMLFALSVALGCDLFDSAAYALYAKNGRYLTADGTLHLKDMKDLKSFPCTCKVCSEYTPKQLYNLEEKEKTRLLAEHNLYVTFEEIDRIKNAIKEGNLWELVEERCRSHPKLLNGLRVISKYMDFIEKHDPVSKKSGFFYTGYESMNRPEIYRHKQRLDRIQYDKIYVTSVSENTSKPYSENLSNVPCDVDVLVKDSVFGLVPLNIDTMYPLAQNEVPDLYDFEKKYNNEFVSEFNEKHAEKILDISTYNYYINHYGKKKECDKINPDIFRIGKMLEYQYGAKILDEELMEKVKSRRSKNTGRIRNLLLEKEVLFTLRANDNFLIPAKSGAELLHEKLEFPKYRIVIDSSVEEFARAGKSVYSKFVKDCDPELRPFEEVLIVNSDDELLAYGTTILNGRELMEFDYGVAATLRGGLKK.

Asp88 serves as the catalytic Nucleophile. The substrate site is built by Asp123 and Ala194. Zn(2+) contacts are provided by Cys280, Cys282, and Cys285. The 76-residue stretch at 573-648 (KYRIVIDSSV…VAATLRGGLK (76 aa)) folds into the PUA domain.

Belongs to the archaeosine tRNA-ribosyltransferase family. Zn(2+) serves as cofactor.

It catalyses the reaction guanosine(15) in tRNA + 7-cyano-7-deazaguanine = 7-cyano-7-carbaguanosine(15) in tRNA + guanine. The protein operates within tRNA modification; archaeosine-tRNA biosynthesis. Its function is as follows. Exchanges the guanine residue with 7-cyano-7-deazaguanine (preQ0) at position 15 in the dihydrouridine loop (D-loop) of archaeal tRNAs. The sequence is that of tRNA-guanine(15) transglycosylase from Methanococcus maripaludis (strain DSM 14266 / JCM 13030 / NBRC 101832 / S2 / LL).